We begin with the raw amino-acid sequence, 215 residues long: Large ribosomal subunit protein uL16 (215 aa).

Belongs to the universal ribosomal protein uL16 family. In terms of assembly, component of the small ribosomal subunit. Mature ribosomes consist of a small (40S) and a large (60S) subunit. The 40S subunit contains about 33 different proteins and 1 molecule of RNA (18S). The 60S subunit contains about 49 different proteins and 3 molecules of RNA (25S, 5.8S and 5S).

This chain is Large ribosomal subunit protein uL16 (RPL10), found in Euglena gracilis.